The primary structure comprises 226 residues: tRNA (guanine-N(7)-)-methyltransferase (226 aa).

The segment at Met-1–Pro-21 is disordered. S-adenosyl-L-methionine is bound by residues Glu-59, Glu-84, Asp-111, and Asp-133. The active site involves Asp-133. A substrate-binding site is contributed by Lys-137. The segment at Arg-139–Arg-144 is interaction with RNA. Substrate contacts are provided by residues Asp-169 and Thr-206 to Glu-209.

It belongs to the class I-like SAM-binding methyltransferase superfamily. TrmB family.

It catalyses the reaction guanosine(46) in tRNA + S-adenosyl-L-methionine = N(7)-methylguanosine(46) in tRNA + S-adenosyl-L-homocysteine. Its pathway is tRNA modification; N(7)-methylguanine-tRNA biosynthesis. Catalyzes the formation of N(7)-methylguanine at position 46 (m7G46) in tRNA. The polypeptide is tRNA (guanine-N(7)-)-methyltransferase (Caulobacter sp. (strain K31)).